The primary structure comprises 755 residues: uncharacterized protein (755 aa).

Helical transmembrane passes span 46–66, 70–90, 93–113, 118–138, 143–163, 411–431, 446–466, 482–502, and 514–534; these read LGLG…GGLY, LKTI…GTIV, GWGL…YLAV, GAMV…NVST, FTSL…IWPF, IAHL…IFVL, LLGT…IQDP, ALLR…ALIL, and ALLS…GLAF.

The protein belongs to the YccS/YhfK family.

The protein resides in the cell membrane. This is an uncharacterized protein from Synechocystis sp. (strain ATCC 27184 / PCC 6803 / Kazusa).